The chain runs to 1225 residues: DNA-directed RNA polymerase subunit beta' (1225 aa).

Residues C60, C62, C75, and C78 each contribute to the Zn(2+) site. Mg(2+)-binding residues include D450, D452, and D454. Positions 818, 892, 899, and 902 each coordinate Zn(2+).

The protein belongs to the RNA polymerase beta' chain family. In terms of assembly, the RNAP catalytic core consists of 2 alpha, 1 beta, 1 beta' and 1 omega subunit. When a sigma factor is associated with the core the holoenzyme is formed, which can initiate transcription. It depends on Mg(2+) as a cofactor. Zn(2+) serves as cofactor.

It catalyses the reaction RNA(n) + a ribonucleoside 5'-triphosphate = RNA(n+1) + diphosphate. Its function is as follows. DNA-dependent RNA polymerase catalyzes the transcription of DNA into RNA using the four ribonucleoside triphosphates as substrates. This chain is DNA-directed RNA polymerase subunit beta', found in Streptococcus pneumoniae (strain P1031).